Here is a 308-residue protein sequence, read N- to C-terminus: Protein translocase subunit SecF (308 aa).

6 helical membrane-spanning segments follow: residues 14 to 34, 134 to 154, 158 to 178, 185 to 205, 238 to 258, and 267 to 287; these read FFLLSGAITVAGVIVFALFGF, VYAVLAAAACIVVYIAIRFEF, ISGIIALLHDAFIVLAAFALL, TFVAALLTIVGYSINDTIVIF, SIRTVLTVLIAAVILYFFGGI, and LIIGLVSGAYSSIFIASPIWV.

The protein belongs to the SecD/SecF family. SecF subfamily. Forms a complex with SecD. Part of the essential Sec protein translocation apparatus which comprises SecA, SecYEG and auxiliary proteins SecDF. Other proteins may also be involved.

The protein localises to the cell membrane. Functionally, part of the Sec protein translocase complex. Interacts with the SecYEG preprotein conducting channel. SecDF uses the proton motive force (PMF) to complete protein translocation after the ATP-dependent function of SecA. This Alicyclobacillus acidocaldarius subsp. acidocaldarius (strain ATCC 27009 / DSM 446 / BCRC 14685 / JCM 5260 / KCTC 1825 / NBRC 15652 / NCIMB 11725 / NRRL B-14509 / 104-IA) (Bacillus acidocaldarius) protein is Protein translocase subunit SecF.